We begin with the raw amino-acid sequence, 335 residues long: Antigen-presenting glycoprotein CD1d (335 aa).

Residues 1-19 form the signal peptide; that stretch reads MGCLLFLLLWALLQAWGSA. Topologically, residues 20–301 are extracellular; that stretch reads EVPQRLFPLR…VLYWGGSYTS (282 aa). N-linked (GlcNAc...) asparagine glycosylation is found at Asn-38 and Asn-60. Asp-98 serves as a coordination point for a D-galactosylceramide. 2 disulfides stabilise this stretch: Cys-120–Cys-184 and Cys-224–Cys-279. An N-linked (GlcNAc...) asparagine glycan is attached at Asn-126. 169–172 lines the a D-galactosylceramide pocket; that stretch reads DKWT. Asn-181 carries an N-linked (GlcNAc...) asparagine glycan. In terms of domain architecture, Ig-like spans 185-292; the sequence is PQFVSGLLES…HSSLEGQDIV (108 aa). The helical transmembrane segment at 302–322 threads the bilayer; sequence MGLIALAVLACLLFLLIVGFT. The Cytoplasmic portion of the chain corresponds to 323-335; sequence SRFKRQTSYQGVL. The short motif at 331-334 is the Internalization signal element; that stretch reads YQGV.

In terms of assembly, heterodimer with B2M (beta-2-microglobulin). Interacts with MHC II. Expressed on cortical thymocytes, on certain T-cell leukemias, and in various other tissues.

It is found in the cell membrane. It localises to the basolateral cell membrane. The protein resides in the endosome membrane. Its subcellular location is the lysosome membrane. The protein localises to the endoplasmic reticulum membrane. In terms of biological role, antigen-presenting protein that binds self and non-self glycolipids and presents them to T-cell receptors on natural killer T-cells. The polypeptide is Antigen-presenting glycoprotein CD1d (CD1D) (Homo sapiens (Human)).